The following is a 359-amino-acid chain: Halocin-H4 (359 aa).

An N-terminal signal peptide occupies residues 1–46 (MSKDRDGRRTSRRGTLKKIGGFSLGALSFGAVGRTQAATGSSVTTA). Disordered regions lie at residues 40–59 (GSSVTTADIAPPGPNGDPKS) and 340–359 (IPDRIYEEIEQKKKQRSRKQ).

It localises to the secreted. Has antibacterial activity against other haloarchaeons. Interacts with the membrane of the target cells where it causes permeability changes that result in an ionic imbalance leading to cell lysis and death. This chain is Halocin-H4 (halH4), found in Haloferax mediterranei (strain ATCC 33500 / DSM 1411 / JCM 8866 / NBRC 14739 / NCIMB 2177 / R-4) (Halobacterium mediterranei).